The chain runs to 31 residues: Small protein MgtS (31 aa).

Over 1-4 (MLGN) the chain is Periplasmic. Residues 5-25 (MNVFMAVLGIILFSGFLAAYF) form a helical membrane-spanning segment. Over 26–31 (SHKWDD) the chain is Cytoplasmic.

In terms of assembly, interacts with MgtA.

Its subcellular location is the cell inner membrane. Its function is as follows. Modulates intracellular Mg(2+) levels to maintain cellular integrity upon Mg(2+) limitation. Acts by binding and stabilizing the Mg(2+) transporter MgtA, thereby leading to increased intracellular level of Mg(2+). May inhibit FtsH proteolysis of MgtA. The polypeptide is Small protein MgtS (Escherichia coli (strain K12)).